Reading from the N-terminus, the 427-residue chain is Glucan 1,3-beta-glucosidase 2 (427 aa).

The first 17 residues, 1–17 (MLISTFIISSLLSIALA), serve as a signal peptide directing secretion. Residue glutamate 217 is the Proton donor of the active site. 2 disulfide bridges follow: cysteine 299-cysteine 426 and cysteine 324-cysteine 355. Glutamate 316 functions as the Nucleophile in the catalytic mechanism.

This sequence belongs to the glycosyl hydrolase 5 (cellulase A) family.

It localises to the secreted. It carries out the reaction Successive hydrolysis of beta-D-glucose units from the non-reducing ends of (1-&gt;3)-beta-D-glucans, releasing alpha-glucose.. Its function is as follows. Beta-glucanases participate in the metabolism of beta-glucan, the main structural component of the cell wall. It could also function biosynthetically as a transglycosylase. The polypeptide is Glucan 1,3-beta-glucosidase 2 (EXG2) (Wickerhamomyces anomalus (Yeast)).